An 842-amino-acid chain; its full sequence is Protein P (842 aa).

Positions 1–177 are terminal protein domain (TP); sequence MPLSYQHFRR…FCGSPYSWEQ (177 aa). The interval 178–345 is spacer; that stretch reads ELHHGAFLDG…YCLSHLVNLL (168 aa). A disordered region spans residues 186-273; sequence DGPSRMGEES…AKNIASRSAS (88 aa). Over residues 223 to 239 the composition is skewed to polar residues; it reads GPQSQQRPLDRSQQGRS. The polymerase/reverse transcriptase domain (RT) stretch occupies residues 346 to 689; the sequence is EDWGPCTEHG…YLNLYPVARQ (344 aa). In terms of domain architecture, Reverse transcriptase spans 356-599; sequence RHHIRIPRTP…YSLNFMGYVI (244 aa). Positions 428, 550, and 551 each coordinate Mg(2+).

Belongs to the hepadnaviridae P protein family.

It catalyses the reaction DNA(n) + a 2'-deoxyribonucleoside 5'-triphosphate = DNA(n+1) + diphosphate. It carries out the reaction Endonucleolytic cleavage to 5'-phosphomonoester.. Its activity is regulated as follows. Activated by host HSP70 and HSP40 in vitro to be able to bind the epsilon loop of the pgRNA. Because deletion of the RNase H region renders the protein partly chaperone-independent, the chaperones may be needed indirectly to relieve occlusion of the RNA-binding site by this domain. Inhibited by several reverse-transcriptase inhibitors: Lamivudine, Adefovir and Entecavir. Multifunctional enzyme that converts the viral RNA genome into dsDNA in viral cytoplasmic capsids. This enzyme displays a DNA polymerase activity that can copy either DNA or RNA templates, and a ribonuclease H (RNase H) activity that cleaves the RNA strand of RNA-DNA heteroduplexes in a partially processive 3'- to 5'-endonucleasic mode. Neo-synthesized pregenomic RNA (pgRNA) are encapsidated together with the P protein, and reverse-transcribed inside the nucleocapsid. Initiation of reverse-transcription occurs first by binding the epsilon loop on the pgRNA genome, and is initiated by protein priming, thereby the 5'-end of (-)DNA is covalently linked to P protein. Partial (+)DNA is synthesized from the (-)DNA template and generates the relaxed circular DNA (RC-DNA) genome. After budding and infection, the RC-DNA migrates in the nucleus, and is converted into a plasmid-like covalently closed circular DNA (cccDNA). The activity of P protein does not seem to be necessary for cccDNA generation, and is presumably released from (+)DNA by host nuclear DNA repair machinery. The protein is Protein P of Homo sapiens (Human).